The following is a 786-amino-acid chain: MLERTLRVLEYNKVKEQLLEHTASSLGRDKVKHLVPSTDFEEIVEMQDTTDEAAKVIRLKGSAPLGGITDIRSNVKRAKIGSMLSPNELLDIANTMYGSRNMKRFIEDMVDNGVELPILETHVAQIVSLYDLEKKITNCIGDGGEVVDSASDKLRGIRTQIRTAESRIREKLENMTRSSNAQKMLSDSIVTIRNERYVIPVKQEYRGVYGGIVHDQSASGQTLFIEPQVIVELNNALQEARVKEKQEIERILLMLTEEVAVEADIVLSNVEVVANLDFIFAKAFYAKRIKATKPIVNNERYMDLRQARHPLIDPEIIVPNNIMLGKDFTTIVITGPNTGGKTVTLKTVGICVLMAQSGLHIPVMDESEICVFKNIFADIGDEQSIEQSLSTFSSHMVNIVDILEKADFESLVLFDELGAGTDPQEGAALAISILDEVCNRGARVVATTHYPELKAYGYNREQVINASVEFDVNTLSPTYKLLIGVPGRSNAFEISKRLGLSDRVIDQARNHISTDTNKIENMIAKLEESQKNAERDWNEAEALRKQSEKLHRELQRQIIEFNEERDERLLKAQKEGEEKVEAAKKEAEGIIQELRQLRKAQLANVKDHELIEAKSRLEGAAPELVKKQKVNVKNTAPKQQLRAGDEVKVLTFGQKGQLLEKVSDTEWSVQIGILKMKVKESNMEYINTPKQTEKKAVATVKGRDYHVSLELDLRGERFENAMARVEKYLDDAQLASYPRVSIIHGKGTGALRQGVQDYLKKHRGVKTFRYGDMGEGGLGVTVVELK.

335 to 342 (GPNTGGKT) is a binding site for ATP. Positions 711-786 (LDLRGERFEN…GLGVTVVELK (76 aa)) constitute a Smr domain.

This sequence belongs to the DNA mismatch repair MutS family. MutS2 subfamily. In terms of assembly, homodimer. Binds to stalled ribosomes, contacting rRNA.

Functionally, endonuclease that is involved in the suppression of homologous recombination and thus may have a key role in the control of bacterial genetic diversity. In terms of biological role, acts as a ribosome collision sensor, splitting the ribosome into its 2 subunits. Detects stalled/collided 70S ribosomes which it binds and splits by an ATP-hydrolysis driven conformational change. Acts upstream of the ribosome quality control system (RQC), a ribosome-associated complex that mediates the extraction of incompletely synthesized nascent chains from stalled ribosomes and their subsequent degradation. Probably generates substrates for RQC. The protein is Endonuclease MutS2 of Bacillus thuringiensis (strain Al Hakam).